The chain runs to 482 residues: UDP-N-acetylmuramate--L-alanine ligase (482 aa).

A disordered region spans residues 1-26 (MPQLPMTDSAPLPTPAPSSPAQPSAQ). Residue 140–146 (GTHGKTT) coordinates ATP.

The protein belongs to the MurCDEF family.

The protein localises to the cytoplasm. It carries out the reaction UDP-N-acetyl-alpha-D-muramate + L-alanine + ATP = UDP-N-acetyl-alpha-D-muramoyl-L-alanine + ADP + phosphate + H(+). The protein operates within cell wall biogenesis; peptidoglycan biosynthesis. Functionally, cell wall formation. The chain is UDP-N-acetylmuramate--L-alanine ligase from Deinococcus radiodurans (strain ATCC 13939 / DSM 20539 / JCM 16871 / CCUG 27074 / LMG 4051 / NBRC 15346 / NCIMB 9279 / VKM B-1422 / R1).